The sequence spans 508 residues: Steroid 17-alpha-hydroxylase/17,20 lyase (508 aa).

N202 serves as a coordination point for substrate. C442 serves as a coordination point for heme.

The protein belongs to the cytochrome P450 family. Requires heme as cofactor.

The protein localises to the endoplasmic reticulum membrane. The protein resides in the microsome membrane. It carries out the reaction a C21-steroid + reduced [NADPH--hemoprotein reductase] + O2 = a 17alpha-hydroxy-C21-steroid + oxidized [NADPH--hemoprotein reductase] + H2O + H(+). The catalysed reaction is progesterone + reduced [NADPH--hemoprotein reductase] + O2 = 17alpha-hydroxyprogesterone + oxidized [NADPH--hemoprotein reductase] + H2O + H(+). The enzyme catalyses pregnenolone + reduced [NADPH--hemoprotein reductase] + O2 = 17alpha-hydroxypregnenolone + oxidized [NADPH--hemoprotein reductase] + H2O + H(+). It catalyses the reaction 17alpha-hydroxyprogesterone + reduced [NADPH--hemoprotein reductase] + O2 = androst-4-ene-3,17-dione + acetate + oxidized [NADPH--hemoprotein reductase] + H2O + 2 H(+). It carries out the reaction 17alpha-hydroxyprogesterone + reduced [NADPH--hemoprotein reductase] + O2 = 16alpha,17alpha-dihydroxyprogesterone + oxidized [NADPH--hemoprotein reductase] + H2O + H(+). The catalysed reaction is 16alpha,17alpha-dihydroxyprogesterone + reduced [NADPH--hemoprotein reductase] + O2 = 6beta,16alpha,17alpha-trihydroxyprogesterone + oxidized [NADPH--hemoprotein reductase] + H2O + H(+). The enzyme catalyses 17alpha-hydroxypregnenolone + reduced [NADPH--hemoprotein reductase] + O2 = 3beta-hydroxyandrost-5-en-17-one + acetate + oxidized [NADPH--hemoprotein reductase] + H2O + 2 H(+). It catalyses the reaction 16alpha,17alpha-dihydroxypregnenolone + reduced [NADPH--hemoprotein reductase] + O2 = 3beta,16alpha-dihydroxy-androst-5-en-17-one + acetate + oxidized [NADPH--hemoprotein reductase] + H2O + 2 H(+). It carries out the reaction 3beta-hydroxyandrost-5-en-17-one + reduced [NADPH--hemoprotein reductase] + O2 = 3beta,16alpha-dihydroxy-androst-5-en-17-one + oxidized [NADPH--hemoprotein reductase] + H2O + H(+). The catalysed reaction is androst-4-ene-3,17-dione + reduced [NADPH--hemoprotein reductase] + O2 = 16alpha-hydroxyandrost-4-ene-3,17-dione + oxidized [NADPH--hemoprotein reductase] + H2O + H(+). The protein operates within steroid hormone biosynthesis. It participates in steroid biosynthesis; glucocorticoid biosynthesis. Its activity is regulated as follows. Regulated predominantly by intracellular cAMP levels. The 17,20-lyase activity is stimulated by cytochrome b5, which acts as an allosteric effector increasing the Vmax of the lyase activity. A cytochrome P450 monooxygenase involved in corticoid and androgen biosynthesis. Catalyzes 17-alpha hydroxylation of C21 steroids, which is common for both pathways. A second oxidative step, required only for androgen synthesis, involves an acyl-carbon cleavage. The 17-alpha hydroxy intermediates, as part of adrenal glucocorticoids biosynthesis pathway, are precursors of cortisol. Hydroxylates steroid hormones, pregnenolone and progesterone to form 17-alpha hydroxy metabolites, followed by the cleavage of the C17-C20 bond to form C19 steroids, dehydroepiandrosterone (DHEA) and androstenedione. Has 16-alpha hydroxylase activity. Catalyzes 16-alpha hydroxylation of 17-alpha hydroxy pregnenolone, followed by the cleavage of the C17-C20 bond to form 16-alpha-hydroxy DHEA. Also 16-alpha hydroxylates androgens, relevant for estriol synthesis. Mechanistically, uses molecular oxygen inserting one oxygen atom into a substrate, and reducing the second into a water molecule, with two electrons provided by NADPH via cytochrome P450 reductase (CPR; NADPH-ferrihemoprotein reductase). This is Steroid 17-alpha-hydroxylase/17,20 lyase (CYP17A1) from Papio cynocephalus (Yellow baboon).